We begin with the raw amino-acid sequence, 440 residues long: GTPase Der (440 aa).

2 consecutive EngA-type G domains span residues 3 to 167 (PIIA…PYDR) and 176 to 351 (TRIA…EQYC). GTP is bound by residues 9–16 (GRPNVGKS), 56–60 (DTGGF), 119–122 (NKVD), 182–189 (GRPNVGKS), 229–233 (DTAGI), and 294–297 (NKWD). Residues 352-436 (KRVTTGELNR…PLKLIFRGRD (85 aa)) form the KH-like domain.

It belongs to the TRAFAC class TrmE-Era-EngA-EngB-Septin-like GTPase superfamily. EngA (Der) GTPase family. In terms of assembly, associates with the 50S ribosomal subunit.

Its function is as follows. GTPase that plays an essential role in the late steps of ribosome biogenesis. The polypeptide is GTPase Der (Citrifermentans bemidjiense (strain ATCC BAA-1014 / DSM 16622 / JCM 12645 / Bem) (Geobacter bemidjiensis)).